The following is a 710-amino-acid chain: Adenylosuccinate synthetase (710 aa).

Disordered stretches follow at residues 1–57 and 82–112; these read MPVR…NHAK and MDDE…SAQC. The span at 11–25 shows a compositional bias: low complexity; that stretch reads NNSSSGVSNALSSSS. Residues 32–43 show a composition bias toward polar residues; sequence SPSSRENSTPLS. GTP contacts are provided by residues 180–186 and 210–212; these read GDEGKGK and GHT. Aspartate 181 (proton acceptor) is an active-site residue. Mg(2+) contacts are provided by aspartate 181 and glycine 210. IMP-binding positions include 181–184, 208–211, threonine 295, lysine 309, glutamine 421, threonine 437, and lysine 567; these read DEGK and NAGH. The active-site Proton donor is histidine 211. Residue 563-569 coordinates substrate; it reads AVTKKPR. GTP-binding positions include arginine 569 and 697–699; that span reads GNG.

The protein belongs to the adenylosuccinate synthetase family. Homodimer. It depends on Mg(2+) as a cofactor.

The protein resides in the cytoplasm. The catalysed reaction is IMP + L-aspartate + GTP = N(6)-(1,2-dicarboxyethyl)-AMP + GDP + phosphate + 2 H(+). It functions in the pathway purine metabolism; AMP biosynthesis via de novo pathway; AMP from IMP: step 1/2. Plays an important role in the salvage pathway for purine nucleotide biosynthesis. Catalyzes the first committed step in the biosynthesis of AMP from IMP. The sequence is that of Adenylosuccinate synthetase from Leishmania braziliensis.